The primary structure comprises 387 residues: Phosphoglycerate kinase (387 aa).

Substrate contacts are provided by residues 21 to 23, Arg36, 59 to 62, Arg113, and Arg146; these read DLN and HLGR. Residues Lys197, Glu314, and 340 to 343 contribute to the ATP site; that span reads GGDT.

Belongs to the phosphoglycerate kinase family. As to quaternary structure, monomer.

It is found in the cytoplasm. The catalysed reaction is (2R)-3-phosphoglycerate + ATP = (2R)-3-phospho-glyceroyl phosphate + ADP. It functions in the pathway carbohydrate degradation; glycolysis; pyruvate from D-glyceraldehyde 3-phosphate: step 2/5. This Pectobacterium atrosepticum (strain SCRI 1043 / ATCC BAA-672) (Erwinia carotovora subsp. atroseptica) protein is Phosphoglycerate kinase.